Reading from the N-terminus, the 497-residue chain is Probable malate:quinone oxidoreductase (497 aa).

The protein belongs to the MQO family. FAD is required as a cofactor.

It catalyses the reaction (S)-malate + a quinone = a quinol + oxaloacetate. It participates in carbohydrate metabolism; tricarboxylic acid cycle; oxaloacetate from (S)-malate (quinone route): step 1/1. The polypeptide is Probable malate:quinone oxidoreductase (Rhodopseudomonas palustris (strain TIE-1)).